Consider the following 197-residue polypeptide: MSIYAFEGVIPVVHPTAYIHPSAVLIGDVIIGAGVYIGPLASLRGDYGRLIVEAGANLQDGCVMHGYTDMDTIVQENGHIGHGAILHSCIIGRDSLVGMNSVIMDGAIIGEESIVAAMSFVKAGFQGQARQMLMGSPAKHVRDISDQDMQWKRMNTREYQDLTVRCRQGLVETTPLTAPEANRPRLRGTTEVKPKGQ.

A disordered region spans residues 177–197; sequence TAPEANRPRLRGTTEVKPKGQ. A compositionally biased stretch (basic and acidic residues) spans 188–197; the sequence is GTTEVKPKGQ.

The protein belongs to the transferase hexapeptide repeat family.

It participates in amine and polyamine metabolism; carnitine metabolism. Overproduction of CaiE stimulates the activity of CaiB and CaiD. In Proteus sp. (strain LE138), this protein is Carnitine operon protein CaiE.